The following is a 255-amino-acid chain: DNA repair protein RecO (255 aa).

Belongs to the RecO family.

Involved in DNA repair and RecF pathway recombination. The polypeptide is DNA repair protein RecO (Listeria monocytogenes serotype 4a (strain HCC23)).